The primary structure comprises 941 residues: UvrABC system protein A (941 aa).

31-38 (GLSGSGKS) contributes to the ATP binding site. Residues 253–280 (CPICGYSMRELEPRLFSFNNPAGACPTC) form a C4-type zinc finger. ABC transporter domains follow at residues 310–587 (WDRR…PESL) and 607–937 (ANPE…RFLK). Residue 640-647 (GVSGSGKS) participates in ATP binding. The C4-type zinc-finger motif lies at 740-766 (CEACQGDGVIKVEMHFLPDIYVPCDQC).

This sequence belongs to the ABC transporter superfamily. UvrA family. Forms a heterotetramer with UvrB during the search for lesions.

The protein localises to the cytoplasm. Its function is as follows. The UvrABC repair system catalyzes the recognition and processing of DNA lesions. UvrA is an ATPase and a DNA-binding protein. A damage recognition complex composed of 2 UvrA and 2 UvrB subunits scans DNA for abnormalities. When the presence of a lesion has been verified by UvrB, the UvrA molecules dissociate. In Salmonella typhi, this protein is UvrABC system protein A.